A 237-amino-acid polypeptide reads, in one-letter code: MTPQDFYRTLEEDGFSLSSKQKEQFDTYFKLLVEWNTKINLTAITEENEVYLKHFYDSIAPILQAFLANEPIKLLDIGAGAGFPSLPMKILFPNLEVTIIDSLNKRISFLTLLAQELGLENVHFFHGRAEDFGQDKAFRGQFDVVTARAVARMQVLSELTIPFLKIGGKLIALKAQAADQELEEAKNALCLLFGKVIKNHSYQLPNGDSRFITIVEKKKETPNKYPRKAGLPNKKPL.

Residues Gly-78, Phe-83, 129–130, and Arg-148 contribute to the S-adenosyl-L-methionine site; that span reads AE.

This sequence belongs to the methyltransferase superfamily. RNA methyltransferase RsmG family.

The protein resides in the cytoplasm. Functionally, specifically methylates the N7 position of a guanine in 16S rRNA. The chain is Ribosomal RNA small subunit methyltransferase G from Streptococcus pyogenes serotype M12 (strain MGAS2096).